Here is a 334-residue protein sequence, read N- to C-terminus: Dihydroorotate dehydrogenase (quinone) (334 aa).

FMN-binding positions include 61–65 and Thr85; that span reads AGLDK. Lys65 is a binding site for substrate. 110–114 provides a ligand contact to substrate; that stretch reads NRMGF. FMN-binding residues include Asn138 and Asn171. Residue Asn171 participates in substrate binding. Ser174 (nucleophile) is an active-site residue. Asn176 serves as a coordination point for substrate. FMN contacts are provided by Lys216 and Thr244. Residue 245–246 coordinates substrate; it reads NT. Residues Gly266, Gly295, and 316–317 each bind FMN; that span reads YT.

The protein belongs to the dihydroorotate dehydrogenase family. Type 2 subfamily. Monomer. FMN serves as cofactor.

The protein resides in the cell membrane. It carries out the reaction (S)-dihydroorotate + a quinone = orotate + a quinol. The protein operates within pyrimidine metabolism; UMP biosynthesis via de novo pathway; orotate from (S)-dihydroorotate (quinone route): step 1/1. Functionally, catalyzes the conversion of dihydroorotate to orotate with quinone as electron acceptor. The polypeptide is Dihydroorotate dehydrogenase (quinone) (Idiomarina loihiensis (strain ATCC BAA-735 / DSM 15497 / L2-TR)).